Here is a 100-residue protein sequence, read N- to C-terminus: Large ribosomal subunit protein uL23 (100 aa).

This sequence belongs to the universal ribosomal protein uL23 family. As to quaternary structure, part of the 50S ribosomal subunit. Contacts protein L29, and trigger factor when it is bound to the ribosome.

Functionally, one of the early assembly proteins it binds 23S rRNA. One of the proteins that surrounds the polypeptide exit tunnel on the outside of the ribosome. Forms the main docking site for trigger factor binding to the ribosome. This chain is Large ribosomal subunit protein uL23, found in Aeromonas hydrophila subsp. hydrophila (strain ATCC 7966 / DSM 30187 / BCRC 13018 / CCUG 14551 / JCM 1027 / KCTC 2358 / NCIMB 9240 / NCTC 8049).